Reading from the N-terminus, the 349-residue chain is Isopentenyl-diphosphate delta-isomerase (349 aa).

Substrate is bound at residue 5-6 (RK). FMN contacts are provided by residues Ser61, 62–64 (SMT), Ser92, and Asn120. 92–94 (SMR) contacts substrate. Gln159 is a binding site for substrate. Glu160 contacts Mg(2+). Residues Lys189, Thr219, 269–271 (GLR), and 290–291 (AR) contribute to the FMN site.

This sequence belongs to the IPP isomerase type 2 family. As to quaternary structure, homooctamer. Dimer of tetramers. It depends on FMN as a cofactor. NADPH serves as cofactor. Mg(2+) is required as a cofactor.

The protein resides in the cytoplasm. The enzyme catalyses isopentenyl diphosphate = dimethylallyl diphosphate. Its function is as follows. Involved in the biosynthesis of isoprenoids. Catalyzes the 1,3-allylic rearrangement of the homoallylic substrate isopentenyl (IPP) to its allylic isomer, dimethylallyl diphosphate (DMAPP). This Picrophilus torridus (strain ATCC 700027 / DSM 9790 / JCM 10055 / NBRC 100828 / KAW 2/3) protein is Isopentenyl-diphosphate delta-isomerase.